We begin with the raw amino-acid sequence, 461 residues long: tRNA modification GTPase MnmE (461 aa).

(6S)-5-formyl-5,6,7,8-tetrahydrofolate-binding residues include Arg23, Glu88, and Arg127. Residues 223–383 enclose the TrmE-type G domain; that stretch reads GLNTVIVGKP…LKECIKNLFF (161 aa). K(+) is bound at residue Asn233. GTP is bound by residues 233–238, 252–258, and 277–280; these read NVGKSS, TEIPGTT, and DTAG. Ser237 lines the Mg(2+) pocket. The K(+) site is built by Thr252, Ile254, and Thr257. Thr258 provides a ligand contact to Mg(2+). A (6S)-5-formyl-5,6,7,8-tetrahydrofolate-binding site is contributed by Lys461.

It belongs to the TRAFAC class TrmE-Era-EngA-EngB-Septin-like GTPase superfamily. TrmE GTPase family. Homodimer. Heterotetramer of two MnmE and two MnmG subunits. K(+) is required as a cofactor.

The protein resides in the cytoplasm. Functionally, exhibits a very high intrinsic GTPase hydrolysis rate. Involved in the addition of a carboxymethylaminomethyl (cmnm) group at the wobble position (U34) of certain tRNAs, forming tRNA-cmnm(5)s(2)U34. The chain is tRNA modification GTPase MnmE from Clostridium botulinum (strain Loch Maree / Type A3).